Here is a 177-residue protein sequence, read N- to C-terminus: Adenine phosphoribosyltransferase (177 aa).

The protein belongs to the purine/pyrimidine phosphoribosyltransferase family. As to quaternary structure, homodimer.

The protein resides in the cytoplasm. It catalyses the reaction AMP + diphosphate = 5-phospho-alpha-D-ribose 1-diphosphate + adenine. Its pathway is purine metabolism; AMP biosynthesis via salvage pathway; AMP from adenine: step 1/1. Catalyzes a salvage reaction resulting in the formation of AMP, that is energically less costly than de novo synthesis. The chain is Adenine phosphoribosyltransferase from Chlorobium chlorochromatii (strain CaD3).